Here is a 537-residue protein sequence, read N- to C-terminus: Probable protein kinase UbiB (537 aa).

The helical transmembrane segment at 30-47 (LLPWWLRALGYLLPWRWL) threads the bilayer. Positions 126–490 (RFDSEPLASA…KRERHDHHLL (365 aa)) constitute a Protein kinase domain. ATP is bound by residues 132–140 (LASASVAQV) and Lys154. Catalysis depends on Asp289, which acts as the Proton acceptor. 2 helical membrane passes run 489–507 (LLRLLGAALLAGGVLLALQ) and 513–530 (ANAWPSWLMLASGLYLLV).

Belongs to the ABC1 family. UbiB subfamily.

It localises to the cell inner membrane. The protein operates within cofactor biosynthesis; ubiquinone biosynthesis [regulation]. In terms of biological role, is probably a protein kinase regulator of UbiI activity which is involved in aerobic coenzyme Q (ubiquinone) biosynthesis. In Azotobacter vinelandii (strain DJ / ATCC BAA-1303), this protein is Probable protein kinase UbiB.